Reading from the N-terminus, the 245-residue chain is Bax inhibitor 1 (245 aa).

Over 1–30 (MADTANYINDRFQTFMNGLGDRYEPYVREH) the chain is Cytoplasmic. Residues 31 to 51 (LSKVYMVLGSTAAATAMGAML) form a helical membrane-spanning segment. The Lumenal segment spans residues 52-55 (QMRD). Residues 56-76 (FLDLGVLAAVATLVLVLGLHF) traverse the membrane as a helical segment. Residues 77-88 (YKDDGKNYYTRL) lie on the Cytoplasmic side of the membrane. A helical membrane pass occupies residues 89–109 (GMLYAFGFCSGQTLGPLLGYI). At 110 to 115 (CSINPA) the chain is on the lumenal side. The helical transmembrane segment at 116-136 (IILSALTGTFVTFISLSLSAL) threads the bilayer. Topologically, residues 137–142 (LAEQGK) are cytoplasmic. Residues 143-163 (YLYLGGMLVSVINTMALLSLF) form a helical membrane-spanning segment. Residues 164 to 169 (NMVFKS) lie on the Lumenal side of the membrane. Residues 170-190 (YFVQVTQLYVGVFVMAAFIVY) traverse the membrane as a helical segment. Topologically, residues 191–245 (DTQNIVEKCRNGNRDVVQHALDLFFDVLSMFRRLLIILTQKEERKQNERRQNKTK) are cytoplasmic.

Belongs to the BI1 family.

The protein resides in the endoplasmic reticulum membrane. Its function is as follows. Suppressor of apoptosis. Modulates unfolded protein response signaling. Negatively regulates autophagy and autophagosome formation, especially during periods of nutrient deprivation, and reduces cell survival during starvation. This chain is Bax inhibitor 1, found in Drosophila melanogaster (Fruit fly).